A 489-amino-acid chain; its full sequence is EGF-like domain-containing protein 2 (489 aa).

A signal peptide spans 1–23; that stretch reads MMQTLLRGLCVVVLFWGYIKASA. Positions 73-109 constitute an EGF-like domain; that stretch reads PATLCDPPCLNGGQCFEPTADTYMCMCSEAFYGSQCE. 3 cysteine pairs are disulfide-bonded: Cys77–Cys87, Cys81–Cys97, and Cys99–Cys108. One can recognise a ZP domain in the interval 116–370; that stretch reads ECSGDQITIN…GSCPTPAPPA (255 aa). The N-linked (GlcNAc...) asparagine glycan is linked to Asn229. Disordered stretches follow at residues 358 to 389 and 404 to 425; these read CEPGSCPTPAPPAPVQPTPSENPGRKRRAASD and RSNEKLRLPHNKSDKKSQQNAD. The segment covering 363 to 374 has biased composition (pro residues); that stretch reads CPTPAPPAPVQP. Positions 404-420 are enriched in basic and acidic residues; the sequence is RSNEKLRLPHNKSDKKS. Asn414 and Asn479 each carry an N-linked (GlcNAc...) asparagine glycan.

Component of the acid-insoluble organic matrix of calcified layers of the shell (at protein level).

It is found in the secreted. The sequence is that of EGF-like domain-containing protein 2 from Lottia gigantea (Giant owl limpet).